A 241-amino-acid chain; its full sequence is 4-hydroxy-tetrahydrodipicolinate reductase (241 aa).

NAD(+) is bound by residues 7–12 (GVNGHM), 74–76 (GTT), and 98–101 (STNM). His131 serves as the catalytic Proton donor/acceptor. His132 is a (S)-2,3,4,5-tetrahydrodipicolinate binding site. Lys135 acts as the Proton donor in catalysis. Position 141–142 (141–142 (GS)) interacts with (S)-2,3,4,5-tetrahydrodipicolinate.

The protein belongs to the DapB family.

The protein localises to the cytoplasm. The catalysed reaction is (S)-2,3,4,5-tetrahydrodipicolinate + NAD(+) + H2O = (2S,4S)-4-hydroxy-2,3,4,5-tetrahydrodipicolinate + NADH + H(+). It carries out the reaction (S)-2,3,4,5-tetrahydrodipicolinate + NADP(+) + H2O = (2S,4S)-4-hydroxy-2,3,4,5-tetrahydrodipicolinate + NADPH + H(+). It functions in the pathway amino-acid biosynthesis; L-lysine biosynthesis via DAP pathway; (S)-tetrahydrodipicolinate from L-aspartate: step 4/4. Catalyzes the conversion of 4-hydroxy-tetrahydrodipicolinate (HTPA) to tetrahydrodipicolinate. The protein is 4-hydroxy-tetrahydrodipicolinate reductase of Alkaliphilus oremlandii (strain OhILAs) (Clostridium oremlandii (strain OhILAs)).